A 643-amino-acid polypeptide reads, in one-letter code: Phosphomethylpyrimidine synthase (643 aa).

Substrate-binding positions include Asn248, Met277, Tyr306, His342, 362–364 (SRG), 403–406 (DGLR), and Glu442. His446 contacts Zn(2+). Tyr469 is a substrate binding site. Zn(2+) is bound at residue His510. [4Fe-4S] cluster is bound by residues Cys590, Cys593, and Cys598.

It belongs to the ThiC family. In terms of assembly, homodimer. Requires [4Fe-4S] cluster as cofactor.

The enzyme catalyses 5-amino-1-(5-phospho-beta-D-ribosyl)imidazole + S-adenosyl-L-methionine = 4-amino-2-methyl-5-(phosphooxymethyl)pyrimidine + CO + 5'-deoxyadenosine + formate + L-methionine + 3 H(+). It functions in the pathway cofactor biosynthesis; thiamine diphosphate biosynthesis. Its function is as follows. Catalyzes the synthesis of the hydroxymethylpyrimidine phosphate (HMP-P) moiety of thiamine from aminoimidazole ribotide (AIR) in a radical S-adenosyl-L-methionine (SAM)-dependent reaction. This chain is Phosphomethylpyrimidine synthase, found in Paraburkholderia phymatum (strain DSM 17167 / CIP 108236 / LMG 21445 / STM815) (Burkholderia phymatum).